The sequence spans 320 residues: E3 ubiquitin-protein ligase RZF1 (320 aa).

Ser2 is modified (N-acetylserine). The segment at Cys186–Arg227 adopts an RING-type; atypical zinc-finger fold. The segment at Glu229–Tyr320 is disordered. Composition is skewed to low complexity over residues Ser232–Gly249 and Gln295–Gln308.

In terms of tissue distribution, expressed in seedlings and in flowers.

The catalysed reaction is S-ubiquitinyl-[E2 ubiquitin-conjugating enzyme]-L-cysteine + [acceptor protein]-L-lysine = [E2 ubiquitin-conjugating enzyme]-L-cysteine + N(6)-ubiquitinyl-[acceptor protein]-L-lysine.. Functionally, E3 ubiquitin-protein ligase that promotes osmotic stress and abscisic acid (ABA) responses. Negatively regulates drought-mediated control of early seedling development, probably by influencing proline content, water loss, membrane ion leakage and the expression of dehydration stress-related genes (e.g. RAB18, RD29A, RD29B, AOX1A, ERD15, ERD1, COR15A, P5CS1 and P5CR). Modulates bZIP11 accumulation during rehydration following drought. This is E3 ubiquitin-protein ligase RZF1 from Arabidopsis thaliana (Mouse-ear cress).